A 373-amino-acid chain; its full sequence is Arabinonate dehydratase (373 aa).

D199, E225, and E251 together coordinate Mg(2+).

The protein belongs to the mandelate racemase/muconate lactonizing enzyme family. In terms of assembly, homooctamer. Mg(2+) is required as a cofactor.

The catalysed reaction is D-arabinonate = 2-dehydro-3-deoxy-D-arabinonate + H2O. Inhibited by substrate levels above 8 mM. In terms of biological role, catalyzes the dehydration of D-arabinonate to 2-keto-3-deoxy-D-arabinonate. Participates in a pentose oxidation pathway that converts D-arabinonate to 2-oxoglutarate. This chain is Arabinonate dehydratase, found in Saccharolobus solfataricus (strain ATCC 35092 / DSM 1617 / JCM 11322 / P2) (Sulfolobus solfataricus).